The primary structure comprises 239 residues: Phosphoglycolate phosphatase (239 aa).

Asp-14 acts as the Nucleophile in catalysis. Mg(2+) contacts are provided by Asp-14 and Asp-16. Lys-160 is a binding site for substrate. The Mg(2+) site is built by Asp-183 and Asp-187.

The protein belongs to the archaeal SPP-like hydrolase family. The cofactor is Mg(2+).

It catalyses the reaction 2-phosphoglycolate + H2O = glycolate + phosphate. Functionally, catalyzes the dephosphorylation of 2-phosphoglycolate. The chain is Phosphoglycolate phosphatase from Aeropyrum pernix (strain ATCC 700893 / DSM 11879 / JCM 9820 / NBRC 100138 / K1).